We begin with the raw amino-acid sequence, 210 residues long: Ribonuclease HII (210 aa).

Residues 18–207 (RFVAGVDEVG…VHKILCKEET (190 aa)) form the RNase H type-2 domain. The a divalent metal cation site is built by D24, E25, and D115.

Belongs to the RNase HII family. Mn(2+) serves as cofactor. Requires Mg(2+) as cofactor.

Its subcellular location is the cytoplasm. The catalysed reaction is Endonucleolytic cleavage to 5'-phosphomonoester.. In terms of biological role, endonuclease that specifically degrades the RNA of RNA-DNA hybrids. In Paracoccus denitrificans (strain Pd 1222), this protein is Ribonuclease HII.